We begin with the raw amino-acid sequence, 62 residues long: Photosystem II reaction center protein H (62 aa).

A helical transmembrane segment spans residues 30-50 (PVMAGIGFMLLIFLVTILQIY).

The protein belongs to the PsbH family. PSII is composed of 1 copy each of membrane proteins PsbA, PsbB, PsbC, PsbD, PsbE, PsbF, PsbH, PsbI, PsbJ, PsbK, PsbL, PsbM, PsbT, PsbX, PsbY, Psb30/Ycf12, peripheral proteins PsbO, CyanoQ (PsbQ), PsbU, PsbV and a large number of cofactors. It forms dimeric complexes.

Its subcellular location is the cellular thylakoid membrane. Functionally, one of the components of the core complex of photosystem II (PSII), required for its stability and/or assembly. PSII is a light-driven water:plastoquinone oxidoreductase that uses light energy to abstract electrons from H(2)O, generating O(2) and a proton gradient subsequently used for ATP formation. It consists of a core antenna complex that captures photons, and an electron transfer chain that converts photonic excitation into a charge separation. The polypeptide is Photosystem II reaction center protein H (Prochlorococcus marinus (strain MIT 9303)).